The sequence spans 539 residues: uncharacterized protein (539 aa).

The segment at 316-433 (AEHHHQKGKK…ATVERSSPPE (118 aa)) is disordered. Over residues 318 to 352 (HHHQKGKKVPATHRRSSTPHARKTAGTRARTRARK) the composition is skewed to basic residues. Positions 362-384 (KISKKDSGESKQKDETAGMERVF) are enriched in basic and acidic residues. Residues 390-402 (NVRTCSSRASRTG) are compositionally biased toward polar residues.

This is an uncharacterized protein from Treponema pallidum (strain Nichols).